Reading from the N-terminus, the 317-residue chain is Apolipoprotein E (317 aa).

Residues 1–18 (MKVLWAALLVTFLAGCQA) form the signal peptide. Repeat copies occupy residues 80-101 (TLMDETMKELKAYKSELEEQLS), 102-123 (PVAEETRARLSKELQAAQARLG), 124-145 (ADMEDVRSRLVQYRSEVQAMLG), 146-167 (QSTEELRARLASHLRKLRKRLL), 168-189 (RDADDLQKRLAVYQAGAREGAE), 190-211 (RGVSAIRERLGPLVEQGRVRAA), 212-233 (TVGSLASQPLQERAQALGERLR), and 234-255 (ARMEEMGSRTRDRLDEVKEQVA). The interval 80 to 255 (TLMDETMKEL…RLDEVKEQVA (176 aa)) is 8 X 22 AA approximate tandem repeats. The residue at position 143 (Met-143) is a Methionine sulfoxide. Position 147 is a phosphoserine (Ser-147). The interval 158 to 168 (HLRKLRKRLLR) is LDL and other lipoprotein receptors binding. 162 to 165 (LRKR) is a binding site for heparin. The tract at residues 210-290 (AATVGSLASQ…SWFEPLVEDM (81 aa)) is lipid-binding and lipoprotein association. 229–236 (GERLRARM) provides a ligand contact to heparin. A homooligomerization region spans residues 266–317 (QQISLQAEAFQARLKSWFEPLVEDMQRQWAGLVEKVQAAVGASTAPVPIDNH). Residues 278-290 (RLKSWFEPLVEDM) are specificity for association with VLDL.

Belongs to the apolipoprotein A1/A4/E family. In terms of assembly, homotetramer. May interact with ABCA1; functionally associated with ABCA1 in the biogenesis of HDLs. May interact with APP/A4 amyloid-beta peptide; the interaction is extremely stable in vitro but its physiological significance is unclear. May interact with MAPT. May interact with MAP2. In the cerebrospinal fluid, interacts with secreted SORL1. Interacts with PMEL; this allows the loading of PMEL luminal fragment on ILVs to induce fibril nucleation. Post-translationally, APOE exists as multiple glycosylated and sialylated glycoforms within cells and in plasma. The extent of glycosylation and sialylation are tissue and context specific. Glycated in plasma VLDL. In terms of processing, phosphorylated by FAM20C in the extracellular medium.

The protein resides in the secreted. Its subcellular location is the extracellular space. It is found in the extracellular matrix. It localises to the extracellular vesicle. The protein localises to the endosome. The protein resides in the multivesicular body. Functionally, APOE is an apolipoprotein, a protein associating with lipid particles, that mainly functions in lipoprotein-mediated lipid transport between organs via the plasma and interstitial fluids. APOE is a core component of plasma lipoproteins and is involved in their production, conversion and clearance. Apolipoproteins are amphipathic molecules that interact both with lipids of the lipoprotein particle core and the aqueous environment of the plasma. As such, APOE associates with chylomicrons, chylomicron remnants, very low density lipoproteins (VLDL) and intermediate density lipoproteins (IDL) but shows a preferential binding to high-density lipoproteins (HDL). It also binds a wide range of cellular receptors including the LDL receptor/LDLR, the LDL receptor-related proteins LRP1, LRP2 and LRP8 and the very low-density lipoprotein receptor/VLDLR that mediate the cellular uptake of the APOE-containing lipoprotein particles. Finally, APOE also has a heparin-binding activity and binds heparan-sulfate proteoglycans on the surface of cells, a property that supports the capture and the receptor-mediated uptake of APOE-containing lipoproteins by cells. A main function of APOE is to mediate lipoprotein clearance through the uptake of chylomicrons, VLDLs, and HDLs by hepatocytes. APOE is also involved in the biosynthesis by the liver of VLDLs as well as their uptake by peripheral tissues ensuring the delivery of triglycerides and energy storage in muscle, heart and adipose tissues. By participating in the lipoprotein-mediated distribution of lipids among tissues, APOE plays a critical role in plasma and tissues lipid homeostasis. APOE is also involved in two steps of reverse cholesterol transport, the HDLs-mediated transport of cholesterol from peripheral tissues to the liver, and thereby plays an important role in cholesterol homeostasis. First, it is functionally associated with ABCA1 in the biogenesis of HDLs in tissues. Second, it is enriched in circulating HDLs and mediates their uptake by hepatocytes. APOE also plays an important role in lipid transport in the central nervous system, regulating neuron survival and sprouting. In Macaca fascicularis (Crab-eating macaque), this protein is Apolipoprotein E (APOE).